The chain runs to 276 residues: Cell division protein FtsQ (276 aa).

Topologically, residues 1–11 (MQYILKLKYYL) are cytoplasmic. Residues 12-32 (YNITWKLVFICVMLVLLIVGI) form a helical membrane-spanning segment. Over 33-276 (HKNIKWVCDY…NVSKGSHDYD (244 aa)) the chain is Periplasmic. In terms of domain architecture, POTRA spans 45-115 (GPLSYIIVTG…NTLKINLIEY (71 aa)).

Belongs to the FtsQ/DivIB family. FtsQ subfamily. In terms of assembly, part of a complex composed of FtsB, FtsL and FtsQ.

The protein localises to the cell inner membrane. In terms of biological role, essential cell division protein. May link together the upstream cell division proteins, which are predominantly cytoplasmic, with the downstream cell division proteins, which are predominantly periplasmic. May control correct divisome assembly. The sequence is that of Cell division protein FtsQ from Blochmanniella floridana.